The following is a 357-amino-acid chain: MTTAETKPATETGENAGTTGTAGTAATPEILNLARTKVLENGEPLNYEETLQVLQLGDEHLDELLDLAHQVRLKWCGDAVEMEGIISLQTGGCPEDCHFCAQSGLFESPVRSIQLDIAQLIEAAKQTAKTGATEFCIVAAVKGPDEDLMNQMAKAIAAIQAEVDINIAASIGILTQEQVDRLKELGVHRYNHNLETCKSYFPEVVTTHTWEERTSTLEMVRDAGMEVCCGGIVGMGETVEQRAEFAIDLQNLDPTEVPLNFFDPRPGTPFADLEPMPVNDALRTIGAFRLALPRQLLRFAGGRELTLGDLGAEKGLLGGINAVIVGNYLTTLGRPAERDVDMLGKLQLPIKALNATL.

The interval 1-27 (MTTAETKPATETGENAGTTGTAGTAAT) is disordered. The span at 9-27 (ATETGENAGTTGTAGTAAT) shows a compositional bias: low complexity. A Radical SAM core domain is found at 78 to 303 (DAVEMEGIIS…RQLLRFAGGR (226 aa)). Residues Cys93, Cys97, and Cys100 each coordinate [4Fe-4S] cluster. The [2Fe-2S] cluster site is built by Cys136, Cys228, and Arg298.

It belongs to the radical SAM superfamily. Biotin synthase family. Homodimer. [4Fe-4S] cluster serves as cofactor. Requires [2Fe-2S] cluster as cofactor.

It catalyses the reaction (4R,5S)-dethiobiotin + (sulfur carrier)-SH + 2 reduced [2Fe-2S]-[ferredoxin] + 2 S-adenosyl-L-methionine = (sulfur carrier)-H + biotin + 2 5'-deoxyadenosine + 2 L-methionine + 2 oxidized [2Fe-2S]-[ferredoxin]. It functions in the pathway cofactor biosynthesis; biotin biosynthesis; biotin from 7,8-diaminononanoate: step 2/2. In terms of biological role, catalyzes the conversion of dethiobiotin (DTB) to biotin by the insertion of a sulfur atom into dethiobiotin via a radical-based mechanism. The protein is Biotin synthase of Corynebacterium jeikeium (strain K411).